The sequence spans 623 residues: tRNA uridine 5-carboxymethylaminomethyl modification enzyme MnmG (623 aa).

Residue 10–15 (GGGHAG) coordinates FAD. Residue 269 to 283 (GPRYCPSIEDKIVRF) coordinates NAD(+).

This sequence belongs to the MnmG family. In terms of assembly, homodimer. Heterotetramer of two MnmE and two MnmG subunits. FAD is required as a cofactor.

It localises to the cytoplasm. Its function is as follows. NAD-binding protein involved in the addition of a carboxymethylaminomethyl (cmnm) group at the wobble position (U34) of certain tRNAs, forming tRNA-cmnm(5)s(2)U34. The polypeptide is tRNA uridine 5-carboxymethylaminomethyl modification enzyme MnmG (Rhizobium meliloti (strain 1021) (Ensifer meliloti)).